The primary structure comprises 235 residues: MNRLSKRKKILNCIDKSVQYNIADGLRILQETARVKFVENVDVAVNLGINPRRSDQNVRNSVVMPHGLGKKIRIAVFTQGESNVVLARRAGADFAGLEDLCQLIKTKGCTGFDVFIASPDVMNIVSQLGPILGPKGLMPNPKMSTVTQNLTDTIRNFKLGQVRYKNDKNGIIHAVIGKINFNISCLQENLEALVFSIYQVKPTQFKGIYIKKIYISTTMGRSILIDKSSLNVLIH.

The protein belongs to the universal ribosomal protein uL1 family. As to quaternary structure, part of the 50S ribosomal subunit.

Its function is as follows. Binds directly to 23S rRNA. The L1 stalk is quite mobile in the ribosome, and is involved in E site tRNA release. In terms of biological role, protein L1 is also a translational repressor protein, it controls the translation of the L11 operon by binding to its mRNA. In Blochmanniella floridana, this protein is Large ribosomal subunit protein uL1.